Reading from the N-terminus, the 81-residue chain is Large ribosomal subunit protein bL31B (81 aa).

This sequence belongs to the bacterial ribosomal protein bL31 family. Type B subfamily. As to quaternary structure, part of the 50S ribosomal subunit.

The chain is Large ribosomal subunit protein bL31B from Oceanobacillus iheyensis (strain DSM 14371 / CIP 107618 / JCM 11309 / KCTC 3954 / HTE831).